Here is a 310-residue protein sequence, read N- to C-terminus: GMP synthase [glutamine-hydrolyzing] subunit B (310 aa).

Residues 1–187 enclose the GMPS ATP-PPase domain; it reads MSTSSYIDQI…LGLRTDLQPF (187 aa). 27–33 serves as a coordination point for ATP; sequence SGGQDSS.

In terms of assembly, heterodimer composed of a glutamine amidotransferase subunit (A) and a GMP-binding subunit (B).

It catalyses the reaction XMP + L-glutamine + ATP + H2O = GMP + L-glutamate + AMP + diphosphate + 2 H(+). It functions in the pathway purine metabolism; GMP biosynthesis; GMP from XMP (L-Gln route): step 1/1. Its function is as follows. Catalyzes the synthesis of GMP from XMP. The protein is GMP synthase [glutamine-hydrolyzing] subunit B (guaAB) of Thermoplasma acidophilum (strain ATCC 25905 / DSM 1728 / JCM 9062 / NBRC 15155 / AMRC-C165).